The chain runs to 514 residues: Ribonuclease Y (514 aa).

A helical membrane pass occupies residues 2–22 (EDLIVAIVVGAFSSAISIFVV). In terms of domain architecture, KH spans 204–268 (LINNIPLNDE…VATKTIRELL (65 aa)). The HD domain maps to 330–423 (ALAHTLEVAH…VCAADALSAA (94 aa)).

Belongs to the RNase Y family.

The protein localises to the cell membrane. Functionally, endoribonuclease that initiates mRNA decay. This chain is Ribonuclease Y, found in Aliarcobacter butzleri (strain RM4018) (Arcobacter butzleri).